Reading from the N-terminus, the 557-residue chain is Nucleoprotein (557 aa).

The interval 54-235 (MRKDKRSDDD…ITKEESANNI (182 aa)) is binding site for the cap structure m7GTP. 2 residues coordinate Mn(2+): D379 and E381. The Zn(2+) site is built by E389, C496, H499, and C518. Position 522 (D522) interacts with Mn(2+).

The protein belongs to the arenaviridae nucleocapsid protein family. In terms of assembly, homomultimerizes to form the nucleocapsid. Binds to viral genomic RNA. Interacts with glycoprotein G2. Interacts with protein Z; this interaction probably directs the encapsidated genome to budding sites. Interacts with protein L; this interaction does not interfere with Z-L interaction. Interacts with host IKBKE (via Protein kinase domain); the interaction inhibits IKBKE kinase activity.

It localises to the virion. Its subcellular location is the host cytoplasm. Encapsidates the genome, protecting it from nucleases. The encapsidated genomic RNA is termed the nucleocapsid (NC). Serves as template for viral transcription and replication. The increased presence of protein N in host cell does not seem to trigger the switch from transcription to replication as observed in other negative strain RNA viruses. Through the interaction with host IKBKE, strongly inhibits the phosphorylation and nuclear translocation of host IRF3, a protein involved in interferon activation pathway, leading to the inhibition of interferon-beta and IRF3-dependent promoters activation. Also encodes a functional 3'-5' exoribonuclease that degrades preferentially dsRNA substrates and thereby participates in the suppression of interferon induction. This is Nucleoprotein from Calomys callosus (Large vesper mouse).